The chain runs to 139 residues: uncharacterized protein (139 aa).

The next 2 helical transmembrane spans lie at 35–55 (LVFLFVVFFSDCFFSITSFLI) and 57–77 (FGILSSFLIFSLFCLGFLTVI).

It localises to the membrane. This is an uncharacterized protein from Saccharomyces cerevisiae (strain ATCC 204508 / S288c) (Baker's yeast).